The chain runs to 245 residues: DNA polymerase sliding clamp (245 aa).

This sequence belongs to the PCNA family. Homotrimer. The subunits circularize to form a toroid; DNA passes through its center. Replication factor C (RFC) is required to load the toroid on the DNA.

Its function is as follows. Sliding clamp subunit that acts as a moving platform for DNA processing. Responsible for tethering the catalytic subunit of DNA polymerase and other proteins to DNA during high-speed replication. This Methanosarcina mazei (strain ATCC BAA-159 / DSM 3647 / Goe1 / Go1 / JCM 11833 / OCM 88) (Methanosarcina frisia) protein is DNA polymerase sliding clamp.